The following is a 475-amino-acid chain: ATP synthase subunit beta 1 (475 aa).

ATP is bound at residue Gly-153–Thr-160.

The protein belongs to the ATPase alpha/beta chains family. In terms of assembly, F-type ATPases have 2 components, CF(1) - the catalytic core - and CF(0) - the membrane proton channel. CF(1) has five subunits: alpha(3), beta(3), gamma(1), delta(1), epsilon(1). CF(0) has three main subunits: a(1), b(2) and c(9-12). The alpha and beta chains form an alternating ring which encloses part of the gamma chain. CF(1) is attached to CF(0) by a central stalk formed by the gamma and epsilon chains, while a peripheral stalk is formed by the delta and b chains.

The protein resides in the cell membrane. The enzyme catalyses ATP + H2O + 4 H(+)(in) = ADP + phosphate + 5 H(+)(out). In terms of biological role, produces ATP from ADP in the presence of a proton gradient across the membrane. The catalytic sites are hosted primarily by the beta subunits. The polypeptide is ATP synthase subunit beta 1 (Mycoplasmopsis pulmonis (strain UAB CTIP) (Mycoplasma pulmonis)).